The primary structure comprises 84 residues: Large ribosomal subunit protein bL27 (84 aa).

The interval 1–20 (MAHKKAGGSTRNGRDSNPKY) is disordered.

Belongs to the bacterial ribosomal protein bL27 family.

The polypeptide is Large ribosomal subunit protein bL27 (Francisella tularensis subsp. tularensis (strain FSC 198)).